Consider the following 388-residue polypeptide: MRYLTAGESHGPSLTAIIEGIPAGLTLHPADIDHELQRRQGGYGRGARMSIETDRVQISSGVRHGKTTGAPITLTVINKDHQKWLDVMAVGDIEETLKLKRRVKHPRPGHADLVGGIKYHFNDLRDALERSSARETTMRVAVGAVAKRILAELGIDMLHHILIFGGITITIPSKLSFRELQERALHSELSIVNPKQEKEIKTYIDKIKKEGDTIGGIIETIVQGVPAGLGSYVQWDKKLDAKLAQAVLSINAFKGVEFGVGFDMGFQKGSQVMDEITWTPTQGYGRQTNHLGGFEGGMTTGQPLVVKGVMKPIPTLYKPLMSVDIDSHEPYKATVERSDPTALPAAGVIMENVVATVLAKEILETFSSTTMSELQKAFSDYRAYVKQF.

NADP(+) is bound by residues arginine 39 and arginine 45. Residues arginine 130–serine 132, asparagine 251–alanine 252, glycine 296, lysine 311–threonine 315, and arginine 337 each bind FMN.

This sequence belongs to the chorismate synthase family. In terms of assembly, homotetramer. It depends on FMNH2 as a cofactor.

It carries out the reaction 5-O-(1-carboxyvinyl)-3-phosphoshikimate = chorismate + phosphate. It functions in the pathway metabolic intermediate biosynthesis; chorismate biosynthesis; chorismate from D-erythrose 4-phosphate and phosphoenolpyruvate: step 7/7. Its function is as follows. Catalyzes the anti-1,4-elimination of the C-3 phosphate and the C-6 proR hydrogen from 5-enolpyruvylshikimate-3-phosphate (EPSP) to yield chorismate, which is the branch point compound that serves as the starting substrate for the three terminal pathways of aromatic amino acid biosynthesis. This reaction introduces a second double bond into the aromatic ring system. This chain is Chorismate synthase, found in Streptococcus pyogenes serotype M3 (strain SSI-1).